Consider the following 128-residue polypeptide: Large ribosomal subunit protein bL21 (128 aa).

The disordered stretch occupies residues 104–128 (GKSPSVGPRPKRVKAEPAPAADAAE). Positions 119 to 128 (EPAPAADAAE) are enriched in low complexity.

It belongs to the bacterial ribosomal protein bL21 family. Part of the 50S ribosomal subunit. Contacts protein L20.

Functionally, this protein binds to 23S rRNA in the presence of protein L20. The chain is Large ribosomal subunit protein bL21 from Rhodopseudomonas palustris (strain HaA2).